A 612-amino-acid chain; its full sequence is Glutamine--fructose-6-phosphate aminotransferase [isomerizing] (612 aa).

The active-site Nucleophile; for GATase activity is the C2. The region spanning C2–S221 is the Glutamine amidotransferase type-2 domain. SIS domains follow at residues F289 to I429 and L461 to P602. The active-site For Fru-6P isomerization activity is the K607.

Homodimer.

The protein localises to the cytoplasm. The catalysed reaction is D-fructose 6-phosphate + L-glutamine = D-glucosamine 6-phosphate + L-glutamate. Its function is as follows. Catalyzes the first step in hexosamine metabolism, converting fructose-6P into glucosamine-6P using glutamine as a nitrogen source. The chain is Glutamine--fructose-6-phosphate aminotransferase [isomerizing] from Wigglesworthia glossinidia brevipalpis.